Consider the following 393-residue polypeptide: Metal tolerance protein A2 (393 aa).

Residues 1 to 72 are Cytoplasmic-facing; it reads MVTPKLHLDL…EAQERAASMR (72 aa). The chain crosses the membrane as a helical span at residues 73–93; it reads KLLIAVLLCAIFIVVEVVGGI. Topologically, residues 94-105 are vacuolar; the sequence is KANSLAILTDAA. The chain crosses the membrane as a helical span at residues 106–126; it reads HLLSDVAAFAISLFSLWASGW. Residues 127–138 are Cytoplasmic-facing; the sequence is KANPQQSYGFFR. A helical membrane pass occupies residues 139–159; that stretch reads IEILGALVSIQMIWLLAGILV. The Vacuolar segment spans residues 160-176; sequence YEAIVRLNNGSGEVEGS. A helical transmembrane segment spans residues 177 to 197; sequence LMFAVSAVGLLVNIAMAILLG. The interval 198 to 233 is required for zinc-binding; the sequence is HDHGHGHGHSHDNGHGHSHDHGHGIAATEHHHDSGH. Residues 198 to 257 are Cytoplasmic-facing; that stretch reads HDHGHGHGHSHDNGHGHSHDHGHGIAATEHHHDSGHDESQLSDVLIEQKKQRNVNIQGAY. The segment covering 202–236 has biased composition (basic and acidic residues); sequence HGHGHSHDNGHGHSHDHGHGIAATEHHHDSGHDES. The segment at 202–237 is disordered; sequence HGHGHSHDNGHGHSHDHGHGIAATEHHHDSGHDESQ. The helical transmembrane segment at 258–278 threads the bilayer; it reads LHVLGDSIQSVGVMIGGAIIW. The Vacuolar segment spans residues 279 to 284; the sequence is YKPEWK. The helical transmembrane segment at 285–305 threads the bilayer; that stretch reads ILDLICTLVFSVIVLGTTIGM. Over 306-393 the chain is Cytoplasmic; sequence LRNILEVLME…SHVTIQIERQ (88 aa).

This sequence belongs to the cation diffusion facilitator (CDF) transporter (TC 2.A.4) family. SLC30A subfamily.

The protein resides in the membrane. Functionally, involved in sequestration of excess zinc in the cytoplasm into vacuoles to maintain zinc homeostasis. The protein is Metal tolerance protein A2 (MTPA2) of Arabidopsis thaliana (Mouse-ear cress).